A 115-amino-acid chain; its full sequence is Large ribosomal subunit protein bL19 (115 aa).

It belongs to the bacterial ribosomal protein bL19 family.

Its function is as follows. This protein is located at the 30S-50S ribosomal subunit interface and may play a role in the structure and function of the aminoacyl-tRNA binding site. The polypeptide is Large ribosomal subunit protein bL19 (Tropheryma whipplei (strain TW08/27) (Whipple's bacillus)).